A 138-amino-acid chain; its full sequence is Phosphoribosyl-AMP cyclohydrolase (138 aa).

Mg(2+) is bound at residue Asp85. Cys86 lines the Zn(2+) pocket. Mg(2+) contacts are provided by Asp87 and Asp89. Cys102 and Cys109 together coordinate Zn(2+).

The protein belongs to the PRA-CH family. In terms of assembly, homodimer. Mg(2+) serves as cofactor. The cofactor is Zn(2+).

It localises to the cytoplasm. It catalyses the reaction 1-(5-phospho-beta-D-ribosyl)-5'-AMP + H2O = 1-(5-phospho-beta-D-ribosyl)-5-[(5-phospho-beta-D-ribosylamino)methylideneamino]imidazole-4-carboxamide. It functions in the pathway amino-acid biosynthesis; L-histidine biosynthesis; L-histidine from 5-phospho-alpha-D-ribose 1-diphosphate: step 3/9. Its function is as follows. Catalyzes the hydrolysis of the adenine ring of phosphoribosyl-AMP. The polypeptide is Phosphoribosyl-AMP cyclohydrolase (Methanothermobacter thermautotrophicus (strain ATCC 29096 / DSM 1053 / JCM 10044 / NBRC 100330 / Delta H) (Methanobacterium thermoautotrophicum)).